We begin with the raw amino-acid sequence, 558 residues long: MHETAAAPAPAGFVPWPDDVAARYTAAGHWEGRSLGTHLAEAARKVPEAVCLVDGPVRMSYSELMARADGAAVRMRGLGIRPADRVVVQLPNCWEHVVVTMACLRLGALPIWALPQYRHRELSGVVTHARASALVVPDVYREFDHQALAHEVAEAQPTVRHVLVAGSDVRPDSVDLRALCEPLDADEAARVAAELDRSAPRGEEVAMLKLSGGTTGLPKLVARTHNDLSYMIKRAAQVCGFGRDTVYLAVLPLGHGFPNTGPGVLGTLLAGGRVVISGSPAPEAAFALMERERVTATSVVPAIVMRWLQYRDERPGADLGSLELMQVGASRLEPEVARQVGPKLGCRLQQVFGMAEGLLCLTRLDDPDDVVHYTQGRPISPDDEIRVVDPEGRTVGVGEPGALLTRGPYTPRGYYDSPSANARAFTPDGWYRTGDLVRRTPDGNLIVVGREKDLINRGGEKINAEEVEGFAVQVDGVLQAAAVGLPDSELGERICLFVVLADGTRVELADVRKVMENAETASFKLPERLITLPSLPTTPMGKIDKKALRAAAGRMSET.

ATP is bound by residues 212 to 213 (GG), 329 to 331 (ASR), V351, D435, R450, and K542.

This sequence belongs to the ATP-dependent AMP-binding enzyme family.

It catalyses the reaction 2-hydroxy-7-methoxy-5-methyl-1-naphthoate + ATP + CoA = 2-hydroxy-7-methoxy-5-methyl-1-naphthoyl-CoA + AMP + diphosphate. It participates in antibiotic biosynthesis. Functionally, catalyzes the activation of 2-hydroxy-7-methoxy-5-methyl-1-naphthoate in the biosynthesis of the naphthoate moiety of the neocarzinostatin chromophore. Also catalyzes the activation of other 1-naphthoic acid analogs such as 2-hydroxy-5-methyl-1-naphthoate or 2,7-dihydroxy-5-methyl-1-naphthoate in vitro. The sequence is that of 2-hydroxy-7-methoxy-5-methyl-1-naphthoate--CoA ligase from Streptomyces carzinostaticus.